The primary structure comprises 224 residues: Large ribosomal subunit protein uL3 (224 aa).

Gln158 is modified (N5-methylglutamine).

Belongs to the universal ribosomal protein uL3 family. Part of the 50S ribosomal subunit. Forms a cluster with proteins L14 and L19. Post-translationally, methylated by PrmB.

In terms of biological role, one of the primary rRNA binding proteins, it binds directly near the 3'-end of the 23S rRNA, where it nucleates assembly of the 50S subunit. The sequence is that of Large ribosomal subunit protein uL3 from Acidovorax sp. (strain JS42).